The sequence spans 619 residues: 1-deoxy-D-xylulose-5-phosphate synthase (619 aa).

Residues H63 and 104 to 106 contribute to the thiamine diphosphate site; that span reads GHS. D136 is a binding site for Mg(2+). Residues 137-138, N165, Y272, and E353 contribute to the thiamine diphosphate site; that span reads GS. Position 165 (N165) interacts with Mg(2+).

The protein belongs to the transketolase family. DXPS subfamily. Homodimer. Requires Mg(2+) as cofactor. Thiamine diphosphate is required as a cofactor.

It carries out the reaction D-glyceraldehyde 3-phosphate + pyruvate + H(+) = 1-deoxy-D-xylulose 5-phosphate + CO2. It participates in metabolic intermediate biosynthesis; 1-deoxy-D-xylulose 5-phosphate biosynthesis; 1-deoxy-D-xylulose 5-phosphate from D-glyceraldehyde 3-phosphate and pyruvate: step 1/1. Its function is as follows. Catalyzes the acyloin condensation reaction between C atoms 2 and 3 of pyruvate and glyceraldehyde 3-phosphate to yield 1-deoxy-D-xylulose-5-phosphate (DXP). In Wolinella succinogenes (strain ATCC 29543 / DSM 1740 / CCUG 13145 / JCM 31913 / LMG 7466 / NCTC 11488 / FDC 602W) (Vibrio succinogenes), this protein is 1-deoxy-D-xylulose-5-phosphate synthase.